A 275-amino-acid chain; its full sequence is Diaminopimelate epimerase (275 aa).

Substrate is bound by residues Asn-13, Gln-46, and Asn-66. The active-site Proton donor is Cys-75. Residues 76–77 (GN), Asn-159, Asn-192, and 210–211 (ER) each bind substrate. The active-site Proton acceptor is Cys-219. A substrate-binding site is contributed by 220-221 (GS).

It belongs to the diaminopimelate epimerase family. Homodimer.

It is found in the cytoplasm. The enzyme catalyses (2S,6S)-2,6-diaminopimelate = meso-2,6-diaminopimelate. It functions in the pathway amino-acid biosynthesis; L-lysine biosynthesis via DAP pathway; DL-2,6-diaminopimelate from LL-2,6-diaminopimelate: step 1/1. Its function is as follows. Catalyzes the stereoinversion of LL-2,6-diaminopimelate (L,L-DAP) to meso-diaminopimelate (meso-DAP), a precursor of L-lysine and an essential component of the bacterial peptidoglycan. This chain is Diaminopimelate epimerase, found in Idiomarina loihiensis (strain ATCC BAA-735 / DSM 15497 / L2-TR).